We begin with the raw amino-acid sequence, 280 residues long: Undecaprenyl-diphosphatase (280 aa).

The next 8 membrane-spanning stretches (helical) occupy residues 19–39, 44–64, 89–109, 125–145, 156–176, 197–217, 226–246, and 259–279; these read FLPV…PFSG, FDDL…LFLY, FYFL…GFIA, ILAS…WFFQ, VGFR…IPGV, AEFS…YKLI, VTIP…TLVI, and GVFG…TKFI.

Belongs to the UppP family.

The protein localises to the cell inner membrane. The catalysed reaction is di-trans,octa-cis-undecaprenyl diphosphate + H2O = di-trans,octa-cis-undecaprenyl phosphate + phosphate + H(+). Catalyzes the dephosphorylation of undecaprenyl diphosphate (UPP). Confers resistance to bacitracin. This chain is Undecaprenyl-diphosphatase, found in Leptospira borgpetersenii serovar Hardjo-bovis (strain L550).